A 264-amino-acid polypeptide reads, in one-letter code: S-adenosylmethionine decarboxylase proenzyme (264 aa).

Ser-113 serves as the catalytic Schiff-base intermediate with substrate; via pyruvic acid. Ser-113 is modified (pyruvic acid (Ser); by autocatalysis). The active-site Proton acceptor; for processing activity is the His-118. Residue Cys-141 is the Proton donor; for catalytic activity of the active site.

It belongs to the prokaryotic AdoMetDC family. Type 2 subfamily. As to quaternary structure, heterooctamer of four alpha and four beta chains arranged as a tetramer of alpha/beta heterodimers. Pyruvate serves as cofactor. Post-translationally, is synthesized initially as an inactive proenzyme. Formation of the active enzyme involves a self-maturation process in which the active site pyruvoyl group is generated from an internal serine residue via an autocatalytic post-translational modification. Two non-identical subunits are generated from the proenzyme in this reaction, and the pyruvate is formed at the N-terminus of the alpha chain, which is derived from the carboxyl end of the proenzyme. The post-translation cleavage follows an unusual pathway, termed non-hydrolytic serinolysis, in which the side chain hydroxyl group of the serine supplies its oxygen atom to form the C-terminus of the beta chain, while the remainder of the serine residue undergoes an oxidative deamination to produce ammonia and the pyruvoyl group blocking the N-terminus of the alpha chain.

The catalysed reaction is S-adenosyl-L-methionine + H(+) = S-adenosyl 3-(methylsulfanyl)propylamine + CO2. Its pathway is amine and polyamine biosynthesis; S-adenosylmethioninamine biosynthesis; S-adenosylmethioninamine from S-adenosyl-L-methionine: step 1/1. Functionally, catalyzes the decarboxylation of S-adenosylmethionine to S-adenosylmethioninamine (dcAdoMet), the propylamine donor required for the synthesis of the polyamines spermine and spermidine from the diamine putrescine. This Pseudomonas aeruginosa (strain ATCC 15692 / DSM 22644 / CIP 104116 / JCM 14847 / LMG 12228 / 1C / PRS 101 / PAO1) protein is S-adenosylmethionine decarboxylase proenzyme.